The following is a 195-amino-acid chain: NADH-quinone oxidoreductase subunit C (195 aa).

The protein belongs to the complex I 30 kDa subunit family. In terms of assembly, NDH-1 is composed of 14 different subunits. Subunits NuoB, C, D, E, F, and G constitute the peripheral sector of the complex.

The protein resides in the cell inner membrane. It catalyses the reaction a quinone + NADH + 5 H(+)(in) = a quinol + NAD(+) + 4 H(+)(out). NDH-1 shuttles electrons from NADH, via FMN and iron-sulfur (Fe-S) centers, to quinones in the respiratory chain. The immediate electron acceptor for the enzyme in this species is believed to be ubiquinone. Couples the redox reaction to proton translocation (for every two electrons transferred, four hydrogen ions are translocated across the cytoplasmic membrane), and thus conserves the redox energy in a proton gradient. The protein is NADH-quinone oxidoreductase subunit C of Laribacter hongkongensis (strain HLHK9).